We begin with the raw amino-acid sequence, 312 residues long: Taste receptor type 2 member 140 (312 aa).

Residues 1–9 (MKVTVECAL) lie on the Extracellular side of the membrane. The chain crosses the membrane as a helical span at residues 10–30 (LITLIVEIIIGCLGNGFIAVV). Topologically, residues 31–46 (NIMDWTKRRRFSLVDQ) are cytoplasmic. Residues 47-67 (ILTALAISRLAFVWSLLTVLV) traverse the membrane as a helical segment. Residues 68 to 87 (ISELHSSLLITRKMLRIINN) are Extracellular-facing. The helical transmembrane segment at 88 to 108 (FWTVTNHFSIWLATCLSIFYF) threads the bilayer. Over 109 to 133 (LKIANFSNSIFLSLRWRVKTVVSLT) the chain is Cytoplasmic. A helical transmembrane segment spans residues 134 to 154 (LLVSLLLLLVNVIIINTCIVI). Topologically, residues 155–185 (SVEGYKVNMSYSSHFNNNPQISRIPLFTNTM) are extracellular. The N-linked (GlcNAc...) asparagine glycan is linked to N162. A helical transmembrane segment spans residues 186-206 (FTFIPFTVTLTIFLLLIFSLW). Residues 207 to 229 (RHLKKMQHRAKGPRDPSTTAHIK) are Cytoplasmic-facing. A helical transmembrane segment spans residues 230–250 (ALQMVVTFLFLYTIFFLALVM). Topologically, residues 251–264 (QAWNNEIQSKTVFN) are extracellular. A helical membrane pass occupies residues 265–285 (LVFESIALAFPSGHSCVLILG). The Cytoplasmic segment spans residues 286 to 312 (NSKLRQAFLTIIWWLRSSFNAAELSSP).

The protein belongs to the G-protein coupled receptor T2R family.

It is found in the membrane. Its function is as follows. Putative taste receptor which may play a role in the perception of bitterness. This chain is Taste receptor type 2 member 140, found in Rattus norvegicus (Rat).